Consider the following 273-residue polypeptide: 4-hydroxy-tetrahydrodipicolinate reductase (273 aa).

Residues 12–17 (GAGGRM) and Glu-38 each bind NAD(+). Position 39 (Arg-39) interacts with NADP(+). NAD(+) is bound by residues 102 to 104 (GTT) and 126 to 129 (AANF). The active-site Proton donor/acceptor is His-159. His-160 contacts (S)-2,3,4,5-tetrahydrodipicolinate. Catalysis depends on Lys-163, which acts as the Proton donor. 169 to 170 (GT) serves as a coordination point for (S)-2,3,4,5-tetrahydrodipicolinate.

Belongs to the DapB family. As to quaternary structure, homotetramer.

It is found in the cytoplasm. The enzyme catalyses (S)-2,3,4,5-tetrahydrodipicolinate + NAD(+) + H2O = (2S,4S)-4-hydroxy-2,3,4,5-tetrahydrodipicolinate + NADH + H(+). It catalyses the reaction (S)-2,3,4,5-tetrahydrodipicolinate + NADP(+) + H2O = (2S,4S)-4-hydroxy-2,3,4,5-tetrahydrodipicolinate + NADPH + H(+). It participates in amino-acid biosynthesis; L-lysine biosynthesis via DAP pathway; (S)-tetrahydrodipicolinate from L-aspartate: step 4/4. In terms of biological role, catalyzes the conversion of 4-hydroxy-tetrahydrodipicolinate (HTPA) to tetrahydrodipicolinate. The sequence is that of 4-hydroxy-tetrahydrodipicolinate reductase from Salmonella enteritidis PT4 (strain P125109).